Here is a 530-residue protein sequence, read N- to C-terminus: Seeligeriolysin (530 aa).

An N-terminal signal peptide occupies residues 1 to 25 (MKIFGLVIMSLLFVSLPITQQPEAR). Positions 36-55 (TISPAETPESPPATPKTPVE) are disordered. A run of 4 beta stranded transmembrane segments spans residues 215-228 (ESQL…AFKA), 235-244 (VNFEAISDGK), 313-322 (SNKVKTAFEA), and 330-342 (KGDV…IKNS). Positions 484 to 494 (ECTGLFWEWWR) match the Conserved undecapeptide motif. The short motif at 516-517 (TL) is the Cholesterol binding element.

This sequence belongs to the cholesterol-dependent cytolysin family. Homooligomeric pore complex of 35 to 50 subunits; when inserted in the host membrane.

The protein resides in the secreted. Its subcellular location is the host cell membrane. Its function is as follows. A cholesterol-dependent toxin that causes cytolysis by forming pores in cholesterol containing host membranes. L.seeligeri is non-pathogenic, perhaps in part because this protein is about 25% as toxic as listeriolysin O. Mutating a single residue in the undecapeptide increases toxicity 2-fold. After binding to target membranes, the protein undergoes a major conformation change, leading to its insertion in the host membrane and formation of an oligomeric pore complex. Cholesterol is required for binding to host membranes, membrane insertion and pore formation; cholesterol binding is mediated by a Thr-Leu pair in the C-terminus. Can be reversibly inactivated by oxidation. This Listeria seeligeri protein is Seeligeriolysin.